We begin with the raw amino-acid sequence, 62 residues long: Phyllokinin-1 (62 aa).

The first 19 residues, 1–19 (MSFLKKSLFLVLFLGLVSS), serve as a signal peptide directing secretion. A propeptide spanning residues 20–48 (SICEEEKRETEEEENEDEIEEESEEKKRE) is cleaved from the precursor. Positions 22 to 62 (CEEEKRETEEEENEDEIEEESEEKKREDPERPPGFTPFRVY) are disordered. Acidic residues predominate over residues 30-42 (EEEENEDEIEEES). Residues 43 to 52 (EEKKREDPER) show a composition bias toward basic and acidic residues. Tyr62 is modified (sulfotyrosine; partial).

It belongs to the frog skin active peptide (FSAP) family. Bradykinin-related peptide subfamily. Asp,Pro,Glu-[Thr6,Val10]-phyllokinin and [Thr6,Val10]-phyllokinin occur in sulfated and nonsulfated forms. [Thr6]-bradykinin and Des-Arg-[Thr6]-bradykinin are nonsulfated. As to expression, expressed by the skin glands.

Its subcellular location is the secreted. Inhibits ACE with a Ki of 1.6 uM, and targets B2 bradykinin receptor (BDKRB2). Provokes contraction of smooth muscle preparation (ileum). In vivo, induces an early hyperalgesic effects in living rats after intraplantar injection. This Pithecopus azureus (Orange-legged monkey tree frog) protein is Phyllokinin-1.